Here is a 967-residue protein sequence, read N- to C-terminus: MPFTLGQRWISDTESELGLGTVVAVDTRMITLLFPASGENRLYSRSDAPITRVMFNPGDTVTSHEGWQLKVDDVREEKGLLVYCGQRLDDETSAELREVFLDSKLTFNKPQDRLFAGQIDRMDRFALRYRARKHQNEQALQQWGGLRGMRASLIPHQLHIAHEVGQRHAPRVLLADEVGLGKTIEAGMIIHQQLLAGRASRVLIIVPETLQHQWLVEMLRRFNLLFSLFDDERYAEAKLDSSNPFETEQLVICSLGFVQRNAQRFAQLVNADWDLLVVDEAHHLVWSEESPSAEYQAVETLARATPAVLLLTATPEQLGQQSHFARLRLLDPNRFHDYQEFLAEQQQYRPVADAVTLLLAGEKAQTAELNALSDLLGEQDIEPLLKAINSDSDDNQKARQELIAMLMDRHGTSRVLFRNTRQGVKGFPQRILHQIRLPLPSQYQTAIKVSGIMNANKTLEVRARDMLYPEQIYQQLEGDDATWWNFDPRVEWLLNYLTANRDEKVLVICAQAATALQLEQVLRTREAIRAAVFHEGLSILERDRAAAYFASEEEGAQVLICSEIGSEGRNFQFASHLVMFDLPFNPDLLEQRIGRLDRIGQAKEIQILVPYLENTAQAMLVRWYHEGLDAFEHTCPTGRTIYDAHHAQLIERLTTVGEQQGLDEFIHTCRQQHDNLKQQLEQGRDRLLEMHSNGGEQAQLLAQAIAEQDNDVNLVTFALNLFDIVGINQEDRSDNLIILTPSDHMLVPDFPGLPQDGCTITFDRDQALSREDAQFISWEHPLIRNGLDLVLSGDTGSCAVSLLKNKALPVGTLLAELVYVVEAQAPKHLQLTRFLPPTPVRLLMDRKGTNLAAQVEFESFNRQLNAVNRHTSSKLVNAVQADVHAMLQQAEALVEAQARQLITEAQEQADLQLRRELERLEALKAVNPNIREDELTALESQREQVLSNLHEANWRLDAIRLVVVTHQ.

The Helicase ATP-binding domain occupies 163–333 (EVGQRHAPRV…FARLRLLDPN (171 aa)). Residue 176–183 (DEVGLGKT) coordinates ATP. The short motif at 279–282 (DEAH) is the DEAH box element. In terms of domain architecture, Helicase C-terminal spans 489-643 (RVEWLLNYLT…TCPTGRTIYD (155 aa)).

Belongs to the SNF2/RAD54 helicase family. RapA subfamily. In terms of assembly, interacts with the RNAP. Has a higher affinity for the core RNAP than for the holoenzyme. Its ATPase activity is stimulated by binding to RNAP.

In terms of biological role, transcription regulator that activates transcription by stimulating RNA polymerase (RNAP) recycling in case of stress conditions such as supercoiled DNA or high salt concentrations. Probably acts by releasing the RNAP, when it is trapped or immobilized on tightly supercoiled DNA. Does not activate transcription on linear DNA. Probably not involved in DNA repair. The polypeptide is RNA polymerase-associated protein RapA (Pectobacterium carotovorum subsp. carotovorum (strain PC1)).